The following is a 188-amino-acid chain: Elongation factor P (188 aa).

An N6-(3,6-diaminohexanoyl)-5-hydroxylysine modification is found at K34.

Belongs to the elongation factor P family. In terms of processing, may be beta-lysylated on the epsilon-amino group of Lys-34 by the combined action of EpmA and EpmB, and then hydroxylated on the C5 position of the same residue by EpmC (if this protein is present). Lysylation is critical for the stimulatory effect of EF-P on peptide-bond formation. The lysylation moiety may extend toward the peptidyltransferase center and stabilize the terminal 3-CCA end of the tRNA. Hydroxylation of the C5 position on Lys-34 may allow additional potential stabilizing hydrogen-bond interactions with the P-tRNA.

The protein localises to the cytoplasm. The protein operates within protein biosynthesis; polypeptide chain elongation. Its function is as follows. Involved in peptide bond synthesis. Alleviates ribosome stalling that occurs when 3 or more consecutive Pro residues or the sequence PPG is present in a protein, possibly by augmenting the peptidyl transferase activity of the ribosome. Modification of Lys-34 is required for alleviation. The polypeptide is Elongation factor P (Stenotrophomonas maltophilia (strain K279a)).